An 85-amino-acid polypeptide reads, in one-letter code: U4-theraphotoxin-Hhn1o (85 aa).

A signal peptide spans 1–22 (MKVTLIAILTCAAVLVLHTTAA). Positions 23 to 48 (EELEAESQLMEVGMPDTELAAVDEER) are excised as a propeptide. 3 cysteine pairs are disulfide-bonded: Cys52/Cys66, Cys56/Cys77, and Cys71/Cys82.

Belongs to the neurotoxin 12 (Hwtx-2) family. 02 (Hwtx-2) subfamily. In terms of tissue distribution, expressed by the venom gland.

The protein localises to the secreted. Postsynaptic neurotoxin. The sequence is that of U4-theraphotoxin-Hhn1o from Cyriopagopus hainanus (Chinese bird spider).